Here is a 485-residue protein sequence, read N- to C-terminus: Katanin p60 ATPase-containing subunit A1 (485 aa).

Positions 101–173 (HRSSPCVVRK…KNKAEAVETE (73 aa)) are disordered. Positions 141 to 173 (NGDKGKPQKSKEKKENPSKPKEDKNKAEAVETE) are enriched in basic and acidic residues. 244–251 (GPPGTGKT) contacts ATP.

Belongs to the AAA ATPase family. Katanin p60 subunit A1 subfamily. In terms of assembly, can homooligomerize into hexameric rings, which may be promoted by interaction with microtubules. Interacts with katnb1, which may serve as a targeting subunit.

The protein localises to the cytoplasm. It is found in the cytoskeleton. The protein resides in the microtubule organizing center. Its subcellular location is the centrosome. It localises to the spindle pole. The protein localises to the spindle. The enzyme catalyses n ATP + n H2O + a microtubule = n ADP + n phosphate + (n+1) alpha/beta tubulin heterodimers.. ATPase activity is stimulated by microtubules, which promote homooligomerization. ATP-dependent microtubule severing is stimulated by interaction with katnb1. Catalytic subunit of a complex which severs microtubules in an ATP-dependent manner. Microtubule severing may promote rapid reorganization of cellular microtubule arrays and the release of microtubules from the centrosome following nucleation. The protein is Katanin p60 ATPase-containing subunit A1 (katna1) of Danio rerio (Zebrafish).